The primary structure comprises 306 residues: Protein YIPF1 (306 aa).

Topologically, residues 1 to 119 are cytoplasmic; it reads MAAVDDLQFE…VRLYIRSNPD (119 aa). The tract at residues 33–59 is disordered; that stretch reads PSVSFKHQPRPPGSLGREEDEELLGTN. Residues 50–59 show a composition bias toward acidic residues; sequence EEDEELLGTN. The helical transmembrane segment at 120 to 140 threads the bilayer; it reads LYGPFWICATLVFAIAISGNL. Topologically, residues 141-162 are lumenal; sequence SNFLIHLGEKTYHYVPEFQKVS. The helical transmembrane segment at 163–183 threads the bilayer; it reads IAATVIYAYAWLVPLALWGFL. Topologically, residues 184-200 are cytoplasmic; sequence LWRNSKVMNIVSYSFLE. A helical membrane pass occupies residues 201–221; it reads IVCVYGYSLFIYIPTAVLWII. At 222–227 the chain is on the lumenal side; sequence PQRVIR. The chain crosses the membrane as a helical span at residues 228–248; sequence WVLVTIALGISGSVLAMTFWP. Residues 249-256 lie on the Cytoplasmic side of the membrane; it reads AVREDNRR. Residues 257 to 277 form a helical membrane-spanning segment; that stretch reads VALATIVTIMLLHVLLSVGCL. The Lumenal portion of the chain corresponds to 278 to 306; that stretch reads AYFFDAPEMDHLPAAITTPNQTVAAAKSS. Residue asparagine 297 is glycosylated (N-linked (GlcNAc...) asparagine).

Belongs to the YIP1 family. As to quaternary structure, interacts with YIPF6; this interaction may stabilize YIPF1. May also form a ternary complex with YIPF2 and YIPF6.

The protein localises to the golgi apparatus. It is found in the cis-Golgi network membrane. It localises to the trans-Golgi network membrane. Its subcellular location is the late endosome membrane. This Rattus norvegicus (Rat) protein is Protein YIPF1 (Yipf1).